Reading from the N-terminus, the 314-residue chain is Basic leucine zipper 63 (314 aa).

Residue serine 29 is modified to Phosphoserine; by KIN10. The segment at 94 to 177 (KPQDTSGRSD…SRRRKQAHLS (84 aa)) is disordered. The span at 96-133 (QDTSGRSDNGGANESEQASLASSKATPMMSSAITSGSE) shows a compositional bias: polar residues. One can recognise a bZIP domain in the interval 151–214 (NVKRVKRMLS…NDASVENRVL (64 aa)). The tract at residues 153 to 172 (KRVKRMLSNRESARRSRRRK) is basic motif. The Nuclear localization signal 1 signature appears at 155–162 (VKRMLSNR). The leucine-zipper stretch occupies residues 179 to 193 (LETQVSQLRVENSKL). The segment at 253 to 274 (SLPSETSNSPDTTSSQVTTPEI) is disordered. 2 positions are modified to phosphoserine; by KIN10: serine 294 and serine 300. Residues 295-302 (MRRVESLE) carry the Nuclear localization signal 2 motif.

It belongs to the bZIP family. Homodimer. Forms a heterodimer with LSD1, BZIP1, BZIP2, BZIP9, BZIP10, BZIP11, BZIP25, BZIP44 and BZIP53. Interacts with KIN10 and SNF4. Component of a ternary complex composed of BZIP2-BZIP63 heterodimer and KIN10. Post-translationally, phosphorylated. The phosphorylation at Ser-29, Ser-294 and Ser-300 by KIN10 strongly enhances its ability to form homo- as well as heterodimers and are then essential for its transcriptional activity. As to expression, expressed in roots, shoots, young leaves, pollen, and flowers.

The protein localises to the nucleus. With respect to regulation, up-regulated by KIN10 under a phosphorylation-dependent manner. Its function is as follows. Transcription factor involved in controlling responses to starvation. BZIP2-BZIP63-KIN10 complex binds to the ETFQO promoter to up-regulate its transcription. The chain is Basic leucine zipper 63 (BZIP63) from Arabidopsis thaliana (Mouse-ear cress).